Reading from the N-terminus, the 522-residue chain is AAA ATPase forming ring-shaped complexes (522 aa).

Positions 1-26 (MGQEKHTDAASQSRDPEAVAAHENDQ) are disordered. Residues 20 to 57 (AAHENDQLRQRNHALAKALTRATEELRKAKAQLEQFMA) adopt a coiled-coil conformation. Residue 248–253 (GNGKTL) participates in ATP binding.

This sequence belongs to the AAA ATPase family. As to quaternary structure, homohexamer. Assembles into a hexameric ring structure.

This Bifidobacterium animalis subsp. lactis (strain AD011) protein is AAA ATPase forming ring-shaped complexes.